Here is a 175-residue protein sequence, read N- to C-terminus: NADH-ubiquinone oxidoreductase chain 6 (175 aa).

The next 6 membrane-spanning stretches (helical) occupy residues 1–21, 25–45, 47–67, 88–108, 115–137, and 149–169; these read MMTY…IGSP, SPIY…GMVL, FGGS…MLVV, VVLG…LYVL, LVFK…GVFS, and YGVW…VVIM.

The protein belongs to the complex I subunit 6 family. Core subunit of respiratory chain NADH dehydrogenase (Complex I) which is composed of 45 different subunits.

Its subcellular location is the mitochondrion inner membrane. It carries out the reaction a ubiquinone + NADH + 5 H(+)(in) = a ubiquinol + NAD(+) + 4 H(+)(out). Core subunit of the mitochondrial membrane respiratory chain NADH dehydrogenase (Complex I) which catalyzes electron transfer from NADH through the respiratory chain, using ubiquinone as an electron acceptor. Essential for the catalytic activity and assembly of complex I. This chain is NADH-ubiquinone oxidoreductase chain 6 (MT-ND6), found in Hippopotamus amphibius (Hippopotamus).